Reading from the N-terminus, the 565-residue chain is Methionine--tRNA ligase (565 aa).

Positions 16–26 (PYAYGVPHLGN) match the 'HIGH' region motif. The Zn(2+) site is built by C148, C151, C161, and C164. A 'KMSKS' region motif is present at residues 338–342 (KFSKS). Residue K341 participates in ATP binding.

This sequence belongs to the class-I aminoacyl-tRNA synthetase family. MetG type 1 subfamily. Requires Zn(2+) as cofactor.

The protein localises to the cytoplasm. The enzyme catalyses tRNA(Met) + L-methionine + ATP = L-methionyl-tRNA(Met) + AMP + diphosphate. In terms of biological role, is required not only for elongation of protein synthesis but also for the initiation of all mRNA translation through initiator tRNA(fMet) aminoacylation. This chain is Methionine--tRNA ligase, found in Thermofilum pendens (strain DSM 2475 / Hrk 5).